A 170-amino-acid chain; its full sequence is Phosphopantetheine adenylyltransferase (170 aa).

Threonine 10 is a substrate binding site. ATP is bound by residues 10 to 11 (TF) and histidine 18. Positions 42, 75, and 89 each coordinate substrate. ATP contacts are provided by residues 90 to 92 (GVR), glutamate 100, and 125 to 131 (YTYVASS).

It belongs to the bacterial CoaD family. Homohexamer. Requires Mg(2+) as cofactor.

It localises to the cytoplasm. It carries out the reaction (R)-4'-phosphopantetheine + ATP + H(+) = 3'-dephospho-CoA + diphosphate. The protein operates within cofactor biosynthesis; coenzyme A biosynthesis; CoA from (R)-pantothenate: step 4/5. Functionally, reversibly transfers an adenylyl group from ATP to 4'-phosphopantetheine, yielding dephospho-CoA (dPCoA) and pyrophosphate. The protein is Phosphopantetheine adenylyltransferase of Chlorobium limicola (strain DSM 245 / NBRC 103803 / 6330).